A 607-amino-acid chain; its full sequence is Polyadenylate-binding protein 1-like (607 aa).

4 RRM domains span residues 11–89, 99–175, 191–268, and 294–370; these read SSLY…WSHR, GNIF…HFKS, TNIY…RAQK, and VNLY…LAQR. A PABC domain is found at 523–600; the sequence is HQPLTVSMLA…AVAVLQVHRE (78 aa).

This sequence belongs to the polyadenylate-binding protein type-1 family. In terms of tissue distribution, expressed in ovary and testis.

Its subcellular location is the cytoplasm. In terms of biological role, poly(A)-binding protein involved in oocyte maturation and early embryo development. It is required for cytosolic mRNA polyadenylation and translational activation of maternally stored mRNA in oocytes. This chain is Polyadenylate-binding protein 1-like, found in Mus musculus (Mouse).